We begin with the raw amino-acid sequence, 223 residues long: Ribose-5-phosphate isomerase A (223 aa).

Residues 29–32, 82–85, and 95–98 each bind substrate; these read TGST, DGAD, and KGGG. Glu104 functions as the Proton acceptor in the catalytic mechanism. Lys122 lines the substrate pocket.

Belongs to the ribose 5-phosphate isomerase family. Homodimer.

The enzyme catalyses aldehydo-D-ribose 5-phosphate = D-ribulose 5-phosphate. It participates in carbohydrate degradation; pentose phosphate pathway; D-ribose 5-phosphate from D-ribulose 5-phosphate (non-oxidative stage): step 1/1. Its function is as follows. Catalyzes the reversible conversion of ribose-5-phosphate to ribulose 5-phosphate. In Neisseria gonorrhoeae (strain ATCC 700825 / FA 1090), this protein is Ribose-5-phosphate isomerase A.